Here is a 266-residue protein sequence, read N- to C-terminus: Family of serine hydrolases 3 (266 aa).

Residues serine 117, aspartate 180, and histidine 209 each act as charge relay system in the active site.

Belongs to the AB hydrolase 3 family.

In terms of biological role, serine hydrolase of unknown specificity. The sequence is that of Family of serine hydrolases 3 (FSH3) from Saccharomyces cerevisiae (strain ATCC 204508 / S288c) (Baker's yeast).